Consider the following 838-residue polypeptide: Tuftelin-interacting protein 11 (838 aa).

A compositionally biased stretch (basic and acidic residues) spans 1-13; sequence MSLSHLYRDGEGH. The interval 1–51 is required for interaction with DHX15; that stretch reads MSLSHLYRDGEGHLDDDDDDERENFEITDWDLQNEFNPNRQRHWQTKEEAT. Disordered stretches follow at residues 1–74 and 86–137; these read MSLS…RARD and LKKG…SGGT. Phosphoserine is present on Ser2. Over residues 14-29 the composition is skewed to acidic residues; sequence LDDDDDDERENFEITD. The segment covering 45-65 has biased composition (basic and acidic residues); it reads QTKEEATYGVWAERDSDEERP. 3 positions are modified to phosphoserine: Ser60, Ser96, and Ser99. The span at 92–101 shows a compositional bias: acidic residues; sequence EEADSEDSDA. Over residues 102–117 the composition is skewed to basic and acidic residues; the sequence is EEKPVKQEDFPKDLGP. Ser145 is modified (phosphoserine). Positions 150 to 196 constitute a G-patch domain; that stretch reads TKGIGQKLLQKMGYVPGRGLGKNAQGIINPIEAKQRKGKGAVGAYGS. Residues 193 to 237 form a disordered region; it reads AYGSERTTQSLQDFPVADSEEEAEEEFQKELSQWRKDPSGSKKKP. Phosphoserine is present on Ser211. Positions 218 to 232 are enriched in basic and acidic residues; that stretch reads EFQKELSQWRKDPSG. A Nuclear localization signal motif is present at residues 701 to 706; sequence VKDKFN. The interval 711–735 is required for nuclear speckle localization; sequence IMNRAVSSNVGAYMQPGARENIAYL.

The protein belongs to the TFP11/STIP family. Identified in the spliceosome C complex. Found in the Intron Large (IL) complex, a post-mRNA release spliceosomal complex containing the excised intron, U2, U5 and U6 snRNPs, and splicing factors. Interacts with TUFT1. Interacts with DHX15; indicative for a recruitment of DHX15 to the IL complex. Interacts with GCFC2. In terms of tissue distribution, widely expressed. In tooth it is expressed in ameloblasts and odontoblasts.

The protein localises to the cytoplasm. It is found in the nucleus. In terms of biological role, involved in pre-mRNA splicing, specifically in spliceosome disassembly during late-stage splicing events. Intron turnover seems to proceed through reactions in two lariat-intron associated complexes termed Intron Large (IL) and Intron Small (IS). In cooperation with DHX15 seems to mediate the transition of the U2, U5 and U6 snRNP-containing IL complex to the snRNP-free IS complex leading to efficient debranching and turnover of excised introns. May play a role in the differentiation of ameloblasts and odontoblasts or in the forming of the enamel extracellular matrix. The chain is Tuftelin-interacting protein 11 (Tfip11) from Mus musculus (Mouse).